A 146-amino-acid chain; its full sequence is P antigen family member 1 (146 aa).

Residues Tyr-16 to Pro-146 form a disordered region. The span at Ser-19–Glu-32 shows a compositional bias: acidic residues. Residue Ser-63 is modified to Phosphoserine. Residues Pro-79–Met-92 show a composition bias toward basic and acidic residues. Position 105 is a phosphoserine (Ser-105). The span at Glu-107–Gly-120 shows a compositional bias: basic and acidic residues. Ser-144 carries the post-translational modification Phosphoserine.

It belongs to the GAGE family. As to expression, isolated from prostate cancer cell lines; expression associated with progression to androgen insensitive phenotype. Expressed in normal testis and at lower level in normal placenta.

This is P antigen family member 1 (PAGE1) from Homo sapiens (Human).